A 407-amino-acid chain; its full sequence is RNA-binding motif, single-stranded-interacting protein 2 (407 aa).

Met-1 bears the N-acetylmethionine mark. Residues 14–51 (FGYNKNNKKPYVSLSQQMAPPSPSSSTPNSSSGSTAHD) are disordered. Over residues 37–47 (SSSTPNSSSGS) the composition is skewed to low complexity. 2 RRM domains span residues 56–129 (TNLY…MAKQ) and 135–220 (TNLY…FADG). Ser-106 carries the phosphoserine modification. Ser-280 and Ser-285 each carry phosphoserine. A compositionally biased stretch (low complexity) spans 374–392 (PSSSVSVEESGSQQSQVPV). The tract at residues 374–398 (PSSSVSVEESGSQQSQVPVDAPSEH) is disordered.

The protein localises to the nucleus. The chain is RNA-binding motif, single-stranded-interacting protein 2 (RBMS2) from Bos taurus (Bovine).